Consider the following 571-residue polypeptide: Urease subunit alpha (571 aa).

The region spanning 133 to 571 (GGIDTHVHFI…LPLAQRYFLF (439 aa)) is the Urease domain. Ni(2+) contacts are provided by histidine 138, histidine 140, and lysine 221. An N6-carboxylysine modification is found at lysine 221. A substrate-binding site is contributed by histidine 223. Ni(2+) is bound by residues histidine 250 and histidine 276. Catalysis depends on histidine 324, which acts as the Proton donor. Residue aspartate 364 participates in Ni(2+) binding.

Belongs to the metallo-dependent hydrolases superfamily. Urease alpha subunit family. Heterotrimer of UreA (gamma), UreB (beta) and UreC (alpha) subunits. Three heterotrimers associate to form the active enzyme. Requires Ni cation as cofactor. In terms of processing, carboxylation allows a single lysine to coordinate two nickel ions.

It localises to the cytoplasm. The catalysed reaction is urea + 2 H2O + H(+) = hydrogencarbonate + 2 NH4(+). It participates in nitrogen metabolism; urea degradation; CO(2) and NH(3) from urea (urease route): step 1/1. The polypeptide is Urease subunit alpha (Staphylococcus carnosus (strain TM300)).